We begin with the raw amino-acid sequence, 166 residues long: Phosphopantetheine adenylyltransferase (166 aa).

Serine 11 contributes to the substrate binding site. Residues 11-12 (SF) and histidine 19 each bind ATP. Residues lysine 43, alanine 76, and arginine 90 each contribute to the substrate site. ATP-binding positions include 91-93 (GLR), glutamate 101, and 126-132 (LQPISSS).

Belongs to the bacterial CoaD family. As to quaternary structure, homohexamer. Mg(2+) is required as a cofactor.

It localises to the cytoplasm. It catalyses the reaction (R)-4'-phosphopantetheine + ATP + H(+) = 3'-dephospho-CoA + diphosphate. It participates in cofactor biosynthesis; coenzyme A biosynthesis; CoA from (R)-pantothenate: step 4/5. Functionally, reversibly transfers an adenylyl group from ATP to 4'-phosphopantetheine, yielding dephospho-CoA (dPCoA) and pyrophosphate. In Streptococcus equi subsp. zooepidemicus (strain H70), this protein is Phosphopantetheine adenylyltransferase.